Here is a 921-residue protein sequence, read N- to C-terminus: Probable dipeptidyl-aminopeptidase B (921 aa).

Residues 1 to 87 (MDAPATASRQ…EADTNDLETG (87 aa)) form a disordered region. Residues 1 to 108 (MDAPATASRQ…RVGVDRGLKK (108 aa)) are Cytoplasmic-facing. Over residues 22–33 (SSLSTVSTTSLV) the composition is skewed to low complexity. Positions 35-45 (DRLHEHNEKSY) are enriched in basic and acidic residues. Acidic residues predominate over residues 66-75 (PDDDDDDDES). The chain crosses the membrane as a helical; Signal-anchor for type II membrane protein span at residues 109–129 (VILILAAAFLFAWGAALFVFL). Over 130–921 (SNKSYKHAST…KPIVEPKARV (792 aa)) the chain is Vacuolar. N131, N364, and N577 each carry an N-linked (GlcNAc...) asparagine glycan. S768 acts as the Charge relay system in catalysis. Residue N827 is glycosylated (N-linked (GlcNAc...) asparagine). Active-site charge relay system residues include D845 and H878.

This sequence belongs to the peptidase S9B family.

It localises to the vacuole membrane. It carries out the reaction Release of an N-terminal dipeptide, Xaa-Yaa-|-Zaa-, from a polypeptide, preferentially when Yaa is Pro, provided Zaa is neither Pro nor hydroxyproline.. Type IV dipeptidyl-peptidase which removes N-terminal dipeptides sequentially from polypeptides having unsubstituted N-termini provided that the penultimate residue is proline. This Colletotrichum graminicola (strain M1.001 / M2 / FGSC 10212) (Maize anthracnose fungus) protein is Probable dipeptidyl-aminopeptidase B (DAPB).